We begin with the raw amino-acid sequence, 275 residues long: Ribosomal protein L11 methyltransferase (275 aa).

Positions 130, 151, 172, and 213 each coordinate S-adenosyl-L-methionine.

This sequence belongs to the methyltransferase superfamily. PrmA family.

The protein localises to the cytoplasm. The catalysed reaction is L-lysyl-[protein] + 3 S-adenosyl-L-methionine = N(6),N(6),N(6)-trimethyl-L-lysyl-[protein] + 3 S-adenosyl-L-homocysteine + 3 H(+). Its function is as follows. Methylates ribosomal protein L11. This is Ribosomal protein L11 methyltransferase from Wolinella succinogenes (strain ATCC 29543 / DSM 1740 / CCUG 13145 / JCM 31913 / LMG 7466 / NCTC 11488 / FDC 602W) (Vibrio succinogenes).